The following is a 91-amino-acid chain: Small ribosomal subunit protein uS19 (91 aa).

The protein belongs to the universal ribosomal protein uS19 family.

Its function is as follows. Protein S19 forms a complex with S13 that binds strongly to the 16S ribosomal RNA. This Sphingopyxis alaskensis (strain DSM 13593 / LMG 18877 / RB2256) (Sphingomonas alaskensis) protein is Small ribosomal subunit protein uS19.